The following is a 35-amino-acid chain: GFGSLFKFLAKKVAKTVAKQAAKQGAKYIANKQTE.

At Glu35 the chain carries Glutamic acid 1-amide.

As to expression, expressed by the venom gland.

The protein resides in the secreted. Functionally, has antimicrobial activity against E.coli, E.faecalis, P.aeruginosa, and S.aureus. This is Cupiennin-1c from Cupiennius salei (American wandering spider).